The sequence spans 160 residues: Major strawberry allergen Fra a 1-D (160 aa).

The protein belongs to the BetVI family. Monomer.

The polypeptide is Major strawberry allergen Fra a 1-D (Fragaria ananassa (Strawberry)).